A 263-amino-acid chain; its full sequence is Undecaprenyl-diphosphatase 2 (263 aa).

A run of 8 helical transmembrane segments spans residues 17-37, 42-62, 83-103, 106-126, 142-162, 183-203, 216-236, and 242-262; these read TEFL…LIGF, AKVF…VIFW, LHII…HSAI, VLFG…LMIV, ITYK…WPGF, AEYT…LDLI, LFAT…VSFL, and VKLT…YFFI.

This sequence belongs to the UppP family.

The protein resides in the cell membrane. The enzyme catalyses di-trans,octa-cis-undecaprenyl diphosphate + H2O = di-trans,octa-cis-undecaprenyl phosphate + phosphate + H(+). In terms of biological role, catalyzes the dephosphorylation of undecaprenyl diphosphate (UPP). Confers resistance to bacitracin. In Bacillus anthracis, this protein is Undecaprenyl-diphosphatase 2.